Consider the following 49-residue polypeptide: Light-harvesting protein B800/850/890 alpha-3 chain (49 aa).

The Cytoplasmic segment spans residues 1-14; it reads MNQARIWLVVKPSV. A helical membrane pass occupies residues 15–35; the sequence is GLPLLLGVVLLIALLVHGAIL. His-31 contacts a bacteriochlorophyll. Over 36–49 the chain is Periplasmic; it reads TNTSWYPTYFEGNW.

This sequence belongs to the antenna complex alpha subunit family. In terms of assembly, the core complex is formed by different alpha and beta chains, binding bacteriochlorophyll molecules, and arranged most probably in tetrameric structures disposed around the reaction center. The non-pigmented gamma chains may constitute additional components.

It is found in the cell inner membrane. Functionally, antenna complexes are light-harvesting systems, which transfer the excitation energy to the reaction centers. The chain is Light-harvesting protein B800/850/890 alpha-3 chain from Halorhodospira halophila (strain DSM 244 / SL1) (Ectothiorhodospira halophila (strain DSM 244 / SL1)).